Here is a 116-residue protein sequence, read N- to C-terminus: UPF0102 protein ELI_05985 (116 aa).

It belongs to the UPF0102 family.

In Erythrobacter litoralis (strain HTCC2594), this protein is UPF0102 protein ELI_05985.